The following is a 433-amino-acid chain: Nuclear distribution protein PAC1 (433 aa).

A LisH domain is found at 8 to 40; the sequence is QKDELHRAMLAYLHAAGMHNAYAALQHDAALAD. Positions 57 to 84 form a coiled coil; sequence SVIRLQKKVIDLENRNAALLAELAAAAR. 7 WD repeats span residues 103–144, 146–184, 188–227, 230–269, 272–336, 339–378, and 381–429; these read SHRA…RTLK, HTKA…TNVK, GHDH…CIKT, GHAE…TKME, GHEH…CLRT, GHDN…CTKT, and AHSH…QTIK.

It belongs to the WD repeat LIS1/nudF family. As to quaternary structure, self-associates. Interacts with NDL1 and dynein.

It localises to the cytoplasm. It is found in the cytoskeleton. The protein resides in the spindle pole. Its function is as follows. Positively regulates the activity of the minus-end directed microtubule motor protein dynein. Plays a central role in positioning the mitotic spindle at the bud neck during cell division. Targets cytoplasmic dynein to microtubule plus ends, thereby promoting dynein-mediated microtubule sliding along the bud cortex and consequently the movement of the mitotic spindle to the bud neck. The protein is Nuclear distribution protein PAC1 of Cryptococcus neoformans var. neoformans serotype D (strain B-3501A) (Filobasidiella neoformans).